A 459-amino-acid polypeptide reads, in one-letter code: UDP-N-acetylglucosamine 1-carboxyvinyltransferase (459 aa).

40 to 41 is a phosphoenolpyruvate binding site; that stretch reads KN. Residue arginine 111 coordinates UDP-N-acetyl-alpha-D-glucosamine. The active-site Proton donor is cysteine 135. The residue at position 135 (cysteine 135) is a 2-(S-cysteinyl)pyruvic acid O-phosphothioketal. UDP-N-acetyl-alpha-D-glucosamine is bound by residues 140 to 144, aspartate 324, and valine 346; that span reads RPVDL. The segment at 437 to 459 is disordered; it reads PSAPPSEVSSAVAAGPDAAAAPV. Positions 441 to 459 are enriched in low complexity; it reads PSEVSSAVAAGPDAAAAPV.

The protein belongs to the EPSP synthase family. MurA subfamily.

Its subcellular location is the cytoplasm. It catalyses the reaction phosphoenolpyruvate + UDP-N-acetyl-alpha-D-glucosamine = UDP-N-acetyl-3-O-(1-carboxyvinyl)-alpha-D-glucosamine + phosphate. Its pathway is cell wall biogenesis; peptidoglycan biosynthesis. In terms of biological role, cell wall formation. Adds enolpyruvyl to UDP-N-acetylglucosamine. The protein is UDP-N-acetylglucosamine 1-carboxyvinyltransferase of Gloeobacter violaceus (strain ATCC 29082 / PCC 7421).